A 237-amino-acid polypeptide reads, in one-letter code: MIVFILLSLAAVLQQFVADVNFESESPRRTEKQTEIVDMHNSFRRSVNPTARNMLKMEWYPEAADNAERWAYQCIYDHSANSERVIGGIQCGENIYKSSNPRAWTEIIQSWYDEIQNFEYGVGANPPGSVIGHYTQIVWYKSYRIGCAAAYCPSYPYNYFYVCQYCPTGNMEGLTATPYTSGPTCADCPSHCDDGLCTNPCPITNTFTNCDSLLQQNSCEDSYIKTNCGASCFGQDK.

The first 18 residues, 1–18 (MIVFILLSLAAVLQQFVA), serve as a signal peptide directing secretion. The SCP domain occupies 37–165 (VDMHNSFRRS…PYNYFYVCQY (129 aa)). Disulfide bonds link cysteine 74–cysteine 152, cysteine 91–cysteine 166, cysteine 147–cysteine 163, cysteine 185–cysteine 192, cysteine 188–cysteine 197, cysteine 210–cysteine 228, and cysteine 219–cysteine 232. The ShKT domain maps to 201–237 (CPITNTFTNCDSLLQQNSCEDSYIKTNCGASCFGQDK).

Belongs to the CRISP family. In terms of tissue distribution, expressed by the venom gland.

The protein resides in the secreted. In terms of biological role, blocks contraction of smooth muscle elicited by high potassium-induced depolarization, but does not block caffeine-stimulated contraction. May target voltage-gated calcium channels on smooth muscle. This is Cysteine-rich venom protein ENH2 from Pseudoferania polylepis (Macleay's water snake).